The chain runs to 179 residues: Ribosome maturation factor RimM (179 aa).

One can recognise a PRC barrel domain in the interval K100–L176.

The protein belongs to the RimM family. As to quaternary structure, binds ribosomal protein uS19.

It localises to the cytoplasm. In terms of biological role, an accessory protein needed during the final step in the assembly of 30S ribosomal subunit, possibly for assembly of the head region. Essential for efficient processing of 16S rRNA. May be needed both before and after RbfA during the maturation of 16S rRNA. It has affinity for free ribosomal 30S subunits but not for 70S ribosomes. This Prochlorococcus marinus (strain MIT 9215) protein is Ribosome maturation factor RimM.